The primary structure comprises 40 residues: uncharacterized protein (40 aa).

This is an uncharacterized protein from Leptolyngbya boryana (Plectonema boryanum).